A 429-amino-acid polypeptide reads, in one-letter code: Glutamyl-tRNA reductase (429 aa).

Residues 52 to 55 (TCNR), Ser-110, 115 to 117 (EAQ), and Gln-121 contribute to the substrate site. Cys-53 (nucleophile) is an active-site residue. 190 to 195 (GAGAMI) contacts NADP(+).

Belongs to the glutamyl-tRNA reductase family. As to quaternary structure, homodimer.

It catalyses the reaction (S)-4-amino-5-oxopentanoate + tRNA(Glu) + NADP(+) = L-glutamyl-tRNA(Glu) + NADPH + H(+). It functions in the pathway porphyrin-containing compound metabolism; protoporphyrin-IX biosynthesis; 5-aminolevulinate from L-glutamyl-tRNA(Glu): step 1/2. Catalyzes the NADPH-dependent reduction of glutamyl-tRNA(Glu) to glutamate 1-semialdehyde (GSA). The sequence is that of Glutamyl-tRNA reductase from Verminephrobacter eiseniae (strain EF01-2).